A 130-amino-acid polypeptide reads, in one-letter code: Glycine cleavage system H protein (130 aa).

The Lipoyl-binding domain occupies 24–106; it reads IYSVGITEHA…YADGWLFRIR (83 aa). K65 carries the N6-lipoyllysine modification.

The protein belongs to the GcvH family. As to quaternary structure, the glycine cleavage system is composed of four proteins: P, T, L and H. It depends on (R)-lipoate as a cofactor.

Functionally, the glycine cleavage system catalyzes the degradation of glycine. The H protein shuttles the methylamine group of glycine from the P protein to the T protein. This is Glycine cleavage system H protein from Pectobacterium carotovorum subsp. carotovorum (strain PC1).